A 240-amino-acid polypeptide reads, in one-letter code: UDP-2,3-diacylglucosamine hydrolase (240 aa).

Asp8, His10, Asp41, Asn79, and His114 together coordinate Mn(2+). A substrate-binding site is contributed by 79–80 (NR). Asp122, Ser160, Asn164, Lys167, and His195 together coordinate substrate. Residues His195 and His197 each contribute to the Mn(2+) site.

Belongs to the LpxH family. It depends on Mn(2+) as a cofactor.

The protein resides in the cell inner membrane. The enzyme catalyses UDP-2-N,3-O-bis[(3R)-3-hydroxytetradecanoyl]-alpha-D-glucosamine + H2O = 2-N,3-O-bis[(3R)-3-hydroxytetradecanoyl]-alpha-D-glucosaminyl 1-phosphate + UMP + 2 H(+). The protein operates within glycolipid biosynthesis; lipid IV(A) biosynthesis; lipid IV(A) from (3R)-3-hydroxytetradecanoyl-[acyl-carrier-protein] and UDP-N-acetyl-alpha-D-glucosamine: step 4/6. In terms of biological role, hydrolyzes the pyrophosphate bond of UDP-2,3-diacylglucosamine to yield 2,3-diacylglucosamine 1-phosphate (lipid X) and UMP by catalyzing the attack of water at the alpha-P atom. Involved in the biosynthesis of lipid A, a phosphorylated glycolipid that anchors the lipopolysaccharide to the outer membrane of the cell. In Salmonella agona (strain SL483), this protein is UDP-2,3-diacylglucosamine hydrolase.